The primary structure comprises 454 residues: MSKQFVRSAKNLVKGYSSTQVLVRNATSNDNHQVSKDSLIELAEKSYDSADFFEIMDMLDKRLNDKGKYWRHIAKALTVIDYLIRFGSENCVLWCRENLYIIKTLKEFRHEDDEGIDQGQIVRVKAKELTALLSDDERLNEERNMNIKGRNRKGRRRRGTGRSDENDDDLQRAISASRLTAEEDERRRKQDEDYETALQLSKEEEELKRLQDLQRMQQQQGQQQLQQPMYYDIFGNPITPEEYAQFQLQQQQQQQQQQLQQQPMYYDVFGNPITPEELAQFQQQQQLQEQQYLASMQQQQQAMSNNPFAKSEQSSSSPKRNQLVAASSPQQLQQQKQQEPLIQNRTGNQSMTDKYSKLNELLATGTGIDTFGNVGEARIPAQHTKTGTFINSQGTGYRQVSDDPNHNPFLNSQYTGLPSTSVVPTQTGYGFGNQSQQQSQNNGSNNRGYTLIDL.

In terms of domain architecture, ENTH spans 11 to 143 (NLVKGYSSTQ…SDDERLNEER (133 aa)). 2 disordered regions span residues 142-195 (ERNM…EDYE) and 292-350 (YLAS…GNQS). Positions 149–160 (GRNRKGRRRRGT) are enriched in basic residues. The residue at position 160 (threonine 160) is a Phosphothreonine. Serine 163 carries the phosphoserine modification. UIM domains lie at 165-184 (ENDD…AEED) and 189-208 (KQDE…EELK). Threonine 180 carries the post-translational modification Phosphothreonine. Positions 180–191 (TAEEDERRRKQD) are enriched in basic and acidic residues. Low complexity predominate over residues 292–302 (YLASMQQQQQA). Composition is skewed to polar residues over residues 303–329 (MSNN…ASSP) and 340–350 (PLIQNRTGNQS). Serine 328 is modified (phosphoserine). Residue lysine 357 forms a Glycyl lysine isopeptide (Lys-Gly) (interchain with G-Cter in ubiquitin) linkage. 5 positions are modified to phosphothreonine: threonine 364, threonine 366, threonine 384, threonine 386, and threonine 388. Residues 384-398 (TKTGTFINSQGTGYR) show a composition bias toward polar residues. The segment at 384–405 (TKTGTFINSQGTGYRQVSDDPN) is disordered. Residues threonine 395 and threonine 415 each carry the phosphothreonine; by PRK1 modification. Positions 418 to 428 (PSTSVVPTQTG) are enriched in polar residues. The tract at residues 418 to 454 (PSTSVVPTQTGYGFGNQSQQQSQNNGSNNRGYTLIDL) is disordered. A compositionally biased stretch (low complexity) spans 432 to 446 (GNQSQQQSQNNGSNN). The segment at 447–454 (RGYTLIDL) is clathrin-binding.

This sequence belongs to the epsin family. Interacts with EDE1 and PAN1.

The protein resides in the cytoplasm. It localises to the membrane. In terms of biological role, binds to membranes enriched in phosphatidylinositol 3,5-bisphosphate (PtdIns(3,5)P2) and phosphatidylinositol 4,5-bisphosphate (PtdIns(4,5)P2). Required for endocytosis and localization of actin. Negatively regulated via phosphorylation. The polypeptide is Epsin-1 (ENT1) (Saccharomyces cerevisiae (strain ATCC 204508 / S288c) (Baker's yeast)).